Here is a 99-residue protein sequence, read N- to C-terminus: Large ribosomal subunit protein bL25 (99 aa).

The protein belongs to the bacterial ribosomal protein bL25 family. In terms of assembly, part of the 50S ribosomal subunit; part of the 5S rRNA/L5/L18/L25 subcomplex. Contacts the 5S rRNA. Binds to the 5S rRNA independently of L5 and L18.

Its function is as follows. This is one of the proteins that binds to the 5S RNA in the ribosome where it forms part of the central protuberance. This chain is Large ribosomal subunit protein bL25, found in Nostoc sp. (strain PCC 7120 / SAG 25.82 / UTEX 2576).